The primary structure comprises 503 residues: uncharacterized protein (503 aa).

2 ABC transporter domains span residues 8 to 249 and 261 to 499; these read VPVA…LGRD and IVDQ…MSAI. Residue 43–50 participates in ATP binding; it reads GKNGAGKS.

The protein belongs to the ABC transporter superfamily.

Functionally, probably part of a binding-protein-dependent transport system YphDEF. Probably responsible for energy coupling to the transport system. This is an uncharacterized protein from Escherichia coli (strain K12).